The chain runs to 100 residues: Probable steroid-binding protein 3 (100 aa).

Residue Met-1 is modified to N-acetylmethionine. Residues 1–82 (MEFTAEQLSQ…LTEKEINTLN (82 aa)) enclose the Cytochrome b5 heme-binding domain. Residues 1 to 82 (MEFTAEQLSQ…LTEKEINTLN (82 aa)) form a sterol-binding region.

Belongs to the cytochrome b5 family. MAPR subfamily.

It is found in the nucleus. In Arabidopsis thaliana (Mouse-ear cress), this protein is Probable steroid-binding protein 3 (MP3).